A 341-amino-acid polypeptide reads, in one-letter code: tRNA N6-adenosine threonylcarbamoyltransferase (341 aa).

The Fe cation site is built by histidine 111 and histidine 115. Residues 134 to 138 (LVSGG), aspartate 167, glycine 180, and asparagine 276 each bind substrate. Aspartate 304 lines the Fe cation pocket.

The protein belongs to the KAE1 / TsaD family. It depends on Fe(2+) as a cofactor.

It is found in the cytoplasm. The catalysed reaction is L-threonylcarbamoyladenylate + adenosine(37) in tRNA = N(6)-L-threonylcarbamoyladenosine(37) in tRNA + AMP + H(+). Required for the formation of a threonylcarbamoyl group on adenosine at position 37 (t(6)A37) in tRNAs that read codons beginning with adenine. Is involved in the transfer of the threonylcarbamoyl moiety of threonylcarbamoyl-AMP (TC-AMP) to the N6 group of A37, together with TsaE and TsaB. TsaD likely plays a direct catalytic role in this reaction. The chain is tRNA N6-adenosine threonylcarbamoyltransferase from Pseudomonas aeruginosa (strain LESB58).